The chain runs to 390 residues: Putative nickel insertion protein (390 aa).

The protein belongs to the LarC family.

In Geotalea uraniireducens (strain Rf4) (Geobacter uraniireducens), this protein is Putative nickel insertion protein.